The following is a 150-amino-acid chain: Putative pre-16S rRNA nuclease (150 aa).

Belongs to the YqgF nuclease family.

The protein localises to the cytoplasm. Functionally, could be a nuclease involved in processing of the 5'-end of pre-16S rRNA. The protein is Putative pre-16S rRNA nuclease of Protochlamydia amoebophila (strain UWE25).